The primary structure comprises 211 residues: Urease accessory protein UreG (211 aa).

Position 13 to 20 (13 to 20 (GPVGSGKT)) interacts with GTP.

The protein belongs to the SIMIBI class G3E GTPase family. UreG subfamily. Homodimer. UreD, UreF and UreG form a complex that acts as a GTP-hydrolysis-dependent molecular chaperone, activating the urease apoprotein by helping to assemble the nickel containing metallocenter of UreC. The UreE protein probably delivers the nickel.

It localises to the cytoplasm. In terms of biological role, facilitates the functional incorporation of the urease nickel metallocenter. This process requires GTP hydrolysis, probably effectuated by UreG. This is Urease accessory protein UreG from Alkalilimnicola ehrlichii (strain ATCC BAA-1101 / DSM 17681 / MLHE-1).